Here is a 131-residue protein sequence, read N- to C-terminus: MSFIKEFREFAMRGNVIDMAVGVIIGGAFGKIVSSLVADVIMPILSFFTSSVDFKDLHIVLKEATDKTPAMTLKYGMFIQNIFDFIIIAFAIFLMIKALNKLKKEEPKVEKVITPSNEEKLLTEIRDLLKK.

Transmembrane regions (helical) follow at residues 21–41 (VGVI…ADVI) and 76–96 (GMFI…FLMI).

This sequence belongs to the MscL family. In terms of assembly, homopentamer.

It localises to the cell inner membrane. Functionally, channel that opens in response to stretch forces in the membrane lipid bilayer. May participate in the regulation of osmotic pressure changes within the cell. This Histophilus somni (strain 129Pt) (Haemophilus somnus) protein is Large-conductance mechanosensitive channel.